Here is a 534-residue protein sequence, read N- to C-terminus: Ethanolamine kinase (534 aa).

S23 is subject to Phosphoserine.

The protein belongs to the choline/ethanolamine kinase family.

The protein resides in the cytoplasm. The catalysed reaction is ethanolamine + ATP = phosphoethanolamine + ADP + H(+). It carries out the reaction choline + ATP = phosphocholine + ADP + H(+). Its pathway is phospholipid metabolism; phosphatidylethanolamine biosynthesis; phosphatidylethanolamine from ethanolamine: step 1/3. Catalyzes the committed step of phosphatidylethanolamine synthesis via the CDP-ethanolamine branch of the Kennedy pathway. Also exhibits choline kinase activity, thus contributing to phosphatidylcholine synthesis via the CDP-choline pathway, but its preferred substrate is ethanolamine. This chain is Ethanolamine kinase (EKI1), found in Saccharomyces cerevisiae (strain ATCC 204508 / S288c) (Baker's yeast).